The primary structure comprises 549 residues: Chaperonin GroEL (549 aa).

ATP contacts are provided by residues 29–32, Lys50, 86–90, Gly418, and Asp499; these read TAGP and DGTTT.

The protein belongs to the chaperonin (HSP60) family. In terms of assembly, forms a cylinder of 14 subunits composed of two heptameric rings stacked back-to-back. Interacts with the co-chaperonin GroES.

It localises to the cytoplasm. The catalysed reaction is ATP + H2O + a folded polypeptide = ADP + phosphate + an unfolded polypeptide.. Functionally, together with its co-chaperonin GroES, plays an essential role in assisting protein folding. The GroEL-GroES system forms a nano-cage that allows encapsulation of the non-native substrate proteins and provides a physical environment optimized to promote and accelerate protein folding. In Wolbachia sp. subsp. Drosophila simulans (strain wRi), this protein is Chaperonin GroEL.